The primary structure comprises 7524 residues: Mucin-19 (7524 aa).

A signal peptide spans 1–20 (MKLILLYLAVVLCFVGKGAA). Positions 20 to 47 (ARSPTTTRTPTPSTSEKASHVPEATPTY) are disordered. Positions 21–34 (RSPTTTRTPTPSTS) are enriched in low complexity. The 171-residue stretch at 55 to 225 (GEATMWGKDK…VCEDGVQYCD (171 aa)) folds into the VWFD 1 domain. Cys79 and Cys224 are joined by a disulfide. Residues 298 to 353 (CPGKHIYKECGPSNPPTCSNVAPFQDSECVSGCTCPEGYLLDDIGEKGKCVLKEKC) form the TIL domain. 2 consecutive VWFD domains span residues 392 to 568 (GICK…EGSP) and 851 to 1025 (STCH…QECS). 6 disulfides stabilise this stretch: Cys394-Cys529, Cys434-Cys442, Cys853-Cys989, Cys875-Cys1024, Cys884-Cys986, and Cys900-Cys907. The span at 1244–1261 (AAATRASSSTSGSVETSV) shows a compositional bias: low complexity. 2 disordered regions span residues 1244–7217 (AAAT…SSLA) and 7249–7297 (SVIK…CPDS). Residues 1262–1289 (PATTSTSKAQAHITTASSTETSALNSTA) show a composition bias toward polar residues. Composition is skewed to low complexity over residues 1320 to 7099 (PAVS…AGSG) and 7112 to 7217 (STSG…SSLA). 36 consecutive repeat copies span residues 1321–1483 (AVST…TTGP), 1484–1646 (AVST…TTGP), 1647–1809 (AVST…TTGP), 1810–1972 (AVST…TTGP), 1973–2135 (AVST…TTGP), 2136–2298 (AVST…TTGP), 2299–2461 (AVST…TTGP), 2462–2624 (AVST…TTGP), 2625–2787 (AVST…TTGP), 2788–2950 (AVST…TTGP), 2951–3113 (AVST…TTGP), 3114–3276 (AVST…TTGP), 3277–3439 (AVST…TTGP), 3440–3602 (AVST…TTGP), 3603–3765 (AVST…TTGP), 3766–3928 (AVST…TTGP), 3929–4091 (AVST…TTGP), 4092–4254 (AVST…TTGP), 4255–4417 (AVST…TTGP), 4418–4580 (AVST…TTGP), 4581–4743 (AVST…TTGP), 4744–4906 (AVST…TTGP), 4907–5069 (AVST…TTGP), 5070–5232 (AVST…TTGP), 5233–5395 (AVST…TTGP), 5396–5558 (AVST…TTGP), 5559–5721 (AVST…TTGP), 5722–5884 (AVST…TTGP), 5885–6047 (AVST…TTGP), 6048–6210 (AVST…TTGP), 6211–6373 (AVST…TTGP), 6374–6536 (AVST…TTGP), 6537–6699 (AVST…TTGP), 6700–6862 (AVST…TTGP), 6863–7025 (AVST…TTGP), and 7026–7188 (AVST…TTGP). Residues 1321–7188 (AVSTTSAGST…AETAGSTTGP (5868 aa)) form an approximate repeats region. The span at 7261 to 7291 (AKSNETTGRTTSMPASTSVAPGVTTSPNISQ) shows a compositional bias: polar residues. VWFC domains lie at 7302-7368 (PVCH…GHCE) and 7370-7432 (RTCL…YKCK). Disulfide bonds link Cys7435–Cys7482, Cys7449–Cys7496, Cys7458–Cys7512, and Cys7462–Cys7514. A CTCK domain is found at 7435 to 7519 (CRTTPVNVTV…TTCSCRDQCE (85 aa)).

In terms of tissue distribution, specifically expressed in sublingual salivary glands. Expressed by mucous cells of the submandibular gland and submucosal gland of the trachea. Expression is altered in sld (sublingual gland differentiation arrest) mutants.

It is found in the secreted. In terms of biological role, may function in ocular mucus homeostasis. The protein is Mucin-19 (Muc19) of Mus musculus (Mouse).